The sequence spans 142 residues: Transcriptional regulator MraZ (142 aa).

SpoVT-AbrB domains follow at residues 5 to 47 (EYNH…PLGE) and 76 to 119 (ANEV…SKEK).

Belongs to the MraZ family. Forms oligomers.

It is found in the cytoplasm. The protein resides in the nucleoid. In Clostridium acetobutylicum (strain ATCC 824 / DSM 792 / JCM 1419 / IAM 19013 / LMG 5710 / NBRC 13948 / NRRL B-527 / VKM B-1787 / 2291 / W), this protein is Transcriptional regulator MraZ.